Reading from the N-terminus, the 491-residue chain is Ribonuclease G (491 aa).

Residues 40 to 129 (GNIYKGRVTR…LTTDITLPSR (90 aa)) form the S1 motif domain. Mg(2+) is bound by residues aspartate 305 and aspartate 348.

This sequence belongs to the RNase E/G family. RNase G subfamily. Homodimer, in equilibrium with possible higher multimers. Mg(2+) serves as cofactor.

The protein resides in the cytoplasm. Its function is as follows. An endonuclease that acts in the processing of the 5'-end of 16S rRNA and 23S rRNA. It prefers 5'-monophosphorylated substrates and cleaves single-stranded sites rich in A and U residues; contributes to tRNA processing and mRNA turnover. The protein is Ribonuclease G (rng) of Haemophilus influenzae (strain ATCC 51907 / DSM 11121 / KW20 / Rd).